The following is a 1181-amino-acid chain: MARHGDTRSPSPVGSTHSSSRRSRRDDDRYERTKRDDGRSYRRSRSPERRYRERDRESYRRRERSIARRDDYRDEDSYRPIRRDRSRDRRRSRDRGDDRDYRRRSRERDFRCRRDDSRDRARRRADDSTDLKHKSRRDSSRDRPKDSASRSRETSKPATPAPTAVPTDEEKRAERLAKLEAWKQKQAAERERKQREAAAAGGARSLLDEIDRKSGLSPAVGSPQSPATPSTTADATPAPYAGKFDPKAIAKSAAPAQAASNVLGDDVAVPTAVKASATSTTTKVQANKPSTASKASAPLKAKGVVGRFGLGTKQAADMEKSSATKTLGFGEEESTRRKLERLPTPPLDDANDTNKPEDNAEDDDDVDMHEGDTEEQTAAAARAAAERREERLQNEASKTNGDTTMNDAPHSQEGEKMEVDAKEEEEIDPLDAFMSELVETAPPKKTTGAKFSKAKEQQPEAIFGDENDPDITAVGEGDADDFLAIANKAKKKKDIPKVDHAKMEYEPFRKKFYTEPSDLAQMSEGELASLRLELDGIKVRGVDVPKPVQKWSQCGLGVQTLDVIDRLGYENPTSIQSQAIPAIMSGRDVIGVAKTGSGKTVAFLIPMFRHIKDQRPLENMEGPIGLIMTPTRELATQIHKDCKPFLKALNLRAVCAYGGAPIKDQIAELKRGAEIVVCTPGRMIDLLAANAGRVTNLRRVTYVVLDEADRMFDMGFEPQVMKIMANVRPDRQTVLFSATFPRNMEALARKTLNKPVEIVVGGKSVVAPEITQIVEVRNEDKKFVRLLELLGNLYSSDENEDARALIFVERQEAADTLLRELMRKGYPCMSIHGGKDQIDRDSTIEDFKAGIFPVLIATSVAARGLDVKQLKLVVNYDAPNHLEDYVHRAGRTGRAGNTGTAVTFLTEDQERFSVDIAKALKQSGQKVPEPVQQMVDSFLEKVKAGKEKASASGFGGKGLERLDQERDAARMRERRTYKTGEEGEEEEEKEEKNEQAEERFNKVLSSVQSASAPSLPGVPKGIDLDGKITVHRTEKDANGAKNPLDKVGSAVADIHARLSRAGVMRSGVPIDNRGPDAGAFHATLEINDFPQKARWAVTNRTNVAKILEATGTSITTKGSFYPTGKEPGPGENPKLYILVEGETELAVTNAMRELMRLLKEGTLAAADSDARAPVGGRYNVV.

2 disordered regions span residues 1–243 (MARH…YAGK) and 275–423 (ASAT…DAKE). Polar residues predominate over residues 8–17 (RSPSPVGSTH). Composition is skewed to basic and acidic residues over residues 24 to 87 (RRDD…DRSR) and 94 to 155 (DRGD…RETS). Positions 157–166 (PATPAPTAVP) are enriched in low complexity. The span at 168 to 196 (DEEKRAERLAKLEAWKQKQAAERERKQRE) shows a compositional bias: basic and acidic residues. 2 stretches are compositionally biased toward low complexity: residues 222-243 (SPQS…YAGK) and 275-284 (ASATSTTTKV). Residues 285–294 (QANKPSTASK) show a composition bias toward polar residues. A compositionally biased stretch (acidic residues) spans 359 to 375 (NAEDDDDVDMHEGDTEE). Positions 384–393 (AAERREERLQ) are enriched in basic and acidic residues. Residues 394 to 406 (NEASKTNGDTTMN) show a composition bias toward polar residues. Residues 410-420 (HSQEGEKMEVD) show a composition bias toward basic and acidic residues. The Q motif motif lies at 549 to 577 (QKWSQCGLGVQTLDVIDRLGYENPTSIQS). The Helicase ATP-binding domain maps to 580–758 (IPAIMSGRDV…RKTLNKPVEI (179 aa)). ATP is bound at residue 593 to 600 (AKTGSGKT). The DEAD box signature appears at 706–709 (DEAD). Residues 785–935 (RLLELLGNLY…KVPEPVQQMV (151 aa)) form the Helicase C-terminal domain. Residues 949–998 (ASASGFGGKGLERLDQERDAARMRERRTYKTGEEGEEEEEKEEKNEQAEE) form a disordered region. Basic and acidic residues predominate over residues 958-981 (GLERLDQERDAARMRERRTYKTGE).

It belongs to the DEAD box helicase family. DDX46/PRP5 subfamily.

It is found in the nucleus. The enzyme catalyses ATP + H2O = ADP + phosphate + H(+). Functionally, ATP-dependent RNA helicase involved spliceosome assembly and in nuclear splicing. Catalyzes an ATP-dependent conformational change of U2 snRNP. Bridges U1 and U2 snRNPs and enables stable U2 snRNP association with intron RNA. The sequence is that of Pre-mRNA-processing ATP-dependent RNA helicase prp5 (prp5) from Aspergillus terreus (strain NIH 2624 / FGSC A1156).